The sequence spans 591 residues: Paralemmin-3 (591 aa).

4 repeats span residues 171–174, 183–186, 224–227, and 234–237; these read EKNK, EKNQ, and KNQD. Over residues 282–293 the composition is skewed to polar residues; that stretch reads DQTQSTSDQNME. Disordered regions lie at residues 282 to 317, 332 to 413, and 515 to 591; these read DQTQSTSDQNMETKLPTDIPQQKESQSEGKIQTKDQ, KGTT…QNQD, and PDLK…CVVM. Basic and acidic residues-rich tracts occupy residues 306-317 and 349-383; these read SQSEGKIQTKDQ and EPKEENPKAQDEKLDHHNESVSTVHEQKEVHDMDP. Composition is skewed to polar residues over residues 385-413 and 528-542; these read QLSTHQKSLSISEDQNQGSVSLSDPQNQD and QESSSHEPMSSTIAQ. The segment covering 543 to 554 has biased composition (low complexity); sequence SSSAEGNSSPES. Residues 559 to 575 are compositionally biased toward polar residues; that stretch reads QKSQGTDSQQGGNTATQ. A Nuclear localization signal motif is present at residues 579–583; the sequence is RRKKK. 2 S-palmitoyl cysteine lipidation sites follow: Cys-585 and Cys-587. The residue at position 588 (Cys-588) is a Cysteine methyl ester. Cys-588 carries the S-farnesyl cysteine lipid modification. Residues 589-591 constitute a propeptide, removed in mature form; the sequence is VVM.

This sequence belongs to the paralemmin family. In terms of processing, may be phosphorylated during oocyte maturation. Palmitoylated on Cys-585 and Cys-587 and prenylated on Cys-588; which is required for membrane association. In Xenopus oocyte, in the central nervous system cells of tadpoles and adult frogs, and transiently in epithelial cells of stomach and gut of tadpoles. Highly expressed in kidney.

It is found in the cytoplasm. The protein resides in the nucleus. The protein localises to the cell membrane. In terms of biological role, maternal ATP-binding protein that may have multiple functions during development, one of which may be associated with the development and maintenance of the central nervous system. This chain is Paralemmin-3 (palm3), found in Xenopus laevis (African clawed frog).